The sequence spans 510 residues: Rab proteins geranylgeranyltransferase component A 1 (510 aa).

This sequence belongs to the Rab GDI family. May interact with rab-5, rab-7 and rab-11. Does not interact with rab-3, rab-27 and rab-10. Expressed in several neurons including head neurons, motor neurons located in the ventral nerve cord, HSN and CAN neurons, and tail neurons, and in muscles such as body-wall, pharyngeal, intestinal and anal sphincter. Also expressed in seam cells, the hypodermis and the intestine.

It localises to the cytoplasm. Its function is as follows. Substrate-binding subunit of the Rab geranylgeranyltransferase (GGTase) complex. Binds unprenylated Rab proteins and presents the substrate peptide to the catalytic component B and remains bound to it after the geranylgeranyl transfer reaction. The component A is thought to be regenerated by transferring its prenylated Rab back to the donor membrane. Plays a role in neurotransmitter release from presynaptic terminals at neuromuscular junctions. Positively regulates the function of rab-27 in synaptic transmission most likely through mediating rab-27 prenylation. This Caenorhabditis elegans protein is Rab proteins geranylgeranyltransferase component A 1.